The following is a 739-amino-acid chain: UPF0313 protein YgiQ (739 aa).

Positions 372-650 (AYEMIRFSVN…KALLRYHDPA (279 aa)) constitute a Radical SAM core domain. [4Fe-4S] cluster-binding residues include Cys-386, Cys-390, and Cys-393. Residues 685–739 (REARRQNRNTRPALTKHTPMATQRQTPATAKKASSTQSRPVNAGAKKRPKAAVGR) form a disordered region. The segment covering 704 to 724 (MATQRQTPATAKKASSTQSRP) has biased composition (polar residues). Residues 729-739 (AKKRPKAAVGR) are compositionally biased toward basic residues.

Belongs to the UPF0313 family. [4Fe-4S] cluster is required as a cofactor.

The sequence is that of UPF0313 protein YgiQ (ygiQ) from Escherichia coli (strain K12).